The following is a 523-amino-acid chain: Transcription initiation factor TFIID subunit 4 (523 aa).

2 disordered regions span residues 1–100 and 185–241; these read MSLP…AASD and ASVE…VQGG. A compositionally biased stretch (low complexity) spans 58–77; the sequence is QMQPPRQPIQQQMQHFQSPS. Residues 78–87 show a composition bias toward pro residues; it reads PMAPQGPPGT. One can recognise a TAFH domain in the interval 101–199; that stretch reads DKNVTKCVRF…VNPPPGYVFN (99 aa). Residues 204-213 are compositionally biased toward pro residues; it reads PGPPQPPPPQ. Residues 214–236 are compositionally biased toward low complexity; it reads QQSQQQPPLEMRQIPNPNQIPPQ. Positions 329–383 are histone-fold; sequence LKPDEVLNRITKRMMSSCSVEEEALVAISDAVESHLRELITLMAGVAEHRVESLR. Positions 333–382 are necessary and sufficient for interaction with oma-1; sequence EVLNRITKRMMSSCSVEEEALVAISDAVESHLRELITLMAGVAEHRVESL. The tract at residues 407–435 is disordered; it reads QEEELRESREKESLIRMSKNKNSGKETIE.

This sequence belongs to the TAF4 family. Component of the TFIID basal transcription factor complex, composed of TATA-box-binding protein tbp-1, and a number of TBP-associated factors (TAFs). Interacts (via histone-fold domain) with oma-1 (via histone-fold domain). May also interact with oma-2. Interacts (via histone-fold domain) with taf-12 (via the histone-fold domain).

It is found in the nucleus. The protein resides in the cytoplasm. In terms of biological role, the TFIID basal transcription factor complex plays a major role in the initiation of RNA polymerase II (Pol II)-dependent transcription. TFIID recognizes and binds promoters via its subunit tbp-1, a TATA-box-binding protein, and promotes assembly of the pre-initiation complex (PIC). The TFIID complex consists of tbp-1 and TBP-associated factors (TAFs), including taf-4. Essential for early embryonic development, probably acting via activating transcription initiation by RNA polymerase II, as part of the TFIID complex. In early embryos, but not oocytes, remains, presumably inactive, in the cytoplasm as a result of binding to oma-1. Upon degradation of oma-1, taf-4 is released and bound by taf-12, and the taf-4/12 heterodimer translocates to the nucleus and transcriptional repression is relieved. Involved in lifespan extension in a manner dependent upon mitochondrial function. Plays a role in modulating polyribosome formation. This chain is Transcription initiation factor TFIID subunit 4, found in Caenorhabditis elegans.